A 174-amino-acid chain; its full sequence is Protein CURVATURE THYLAKOID 1B, chloroplastic (174 aa).

Residues methionine 1 to serine 20 form a disordered region. Residues methionine 1–arginine 63 constitute a chloroplast transit peptide. Position 64 is an N-acetylalanine (alanine 64). Over alanine 64–lysine 100 the chain is Stromal. Residues tyrosine 101–isoleucine 121 form a helical membrane-spanning segment. Residues serine 122–arginine 126 lie on the Lumenal side of the membrane. A helical transmembrane segment spans residues leucine 127 to tyrosine 147. The Stromal segment spans residues lysine 148 to serine 174.

The protein belongs to the CURT family. Homo- and heterodimers and trimers. Interacts with PSAL. In terms of processing, phosphorylated on either Thr-65 or Thr-66 by a threonine specific thylakoid kinase.

It localises to the plastid. It is found in the chloroplast thylakoid membrane. In terms of biological role, determines thylakoid architecture by inducing membrane curvature. The polypeptide is Protein CURVATURE THYLAKOID 1B, chloroplastic (CURT1B) (Arabidopsis thaliana (Mouse-ear cress)).